A 216-amino-acid polypeptide reads, in one-letter code: MDITASMVKELREKTGAGMMDCKKALTEAEGNMDRAVEVLRERGLAAVAKKSGRIAAEGLVESYIHGGRIGVIVEVNSETDFVAKNQEFKDFVKDVALHIAASNPQYVRREDVDPALVEKEKEILTKQALNEGKPEKIVEKMVEGRIDKFYKEICLLEQPFVKDPDVTVGDLLTEKISKIGENISIRRFTRYEVGEGIEKKEENFAEEVAKQMAQN.

The tract at residues 80 to 83 (TDFV) is involved in Mg(2+) ion dislocation from EF-Tu.

The protein belongs to the EF-Ts family.

It localises to the cytoplasm. Its function is as follows. Associates with the EF-Tu.GDP complex and induces the exchange of GDP to GTP. It remains bound to the aminoacyl-tRNA.EF-Tu.GTP complex up to the GTP hydrolysis stage on the ribosome. This chain is Elongation factor Ts, found in Alkaliphilus oremlandii (strain OhILAs) (Clostridium oremlandii (strain OhILAs)).